We begin with the raw amino-acid sequence, 105 residues long: Spermatogenesis-associated protein 8 (105 aa).

In terms of tissue distribution, expressed at high levels in adult testis, at moderate levels in sperm and at low levels in fetal testis. Not detected in other tissues.

The sequence is that of Spermatogenesis-associated protein 8 (SPATA8) from Homo sapiens (Human).